The following is a 180-amino-acid chain: Large ribosomal subunit protein uL6 (180 aa).

This sequence belongs to the universal ribosomal protein uL6 family. In terms of assembly, part of the 50S ribosomal subunit.

Its function is as follows. This protein binds to the 23S rRNA, and is important in its secondary structure. It is located near the subunit interface in the base of the L7/L12 stalk, and near the tRNA binding site of the peptidyltransferase center. This is Large ribosomal subunit protein uL6 from Clostridium botulinum (strain Eklund 17B / Type B).